A 220-amino-acid polypeptide reads, in one-letter code: Vesicle-associated membrane protein 7 (220 aa).

N-acetylalanine; partial is present on A2. Topologically, residues A2–K188 are cytoplasmic. Positions V7–L110 constitute a Longin domain. The region spanning K125–K185 is the v-SNARE coiled-coil homology domain. A phosphoserine mark is found at S167 and S168. A helical; Anchor for type IV membrane protein membrane pass occupies residues L189 to C209. The Vesicular portion of the chain corresponds to G210–K220.

Belongs to the synaptobrevin family. In terms of assembly, component of the SNARE complex composed of STX4, SNAP23 and VAMP7 that binds SYT7 during lysosomal exocytosis. Component of the SNARE complex composed of STX7, STX8, VAMP7 and VTI1B that is required for heterotypic fusion of late endosomes with lysosomes. May interact with STX17. Interacts with PICALM. Interacts with RAB21. As to expression, detected in all tissues tested.

Its subcellular location is the cytoplasmic vesicle. The protein resides in the secretory vesicle membrane. The protein localises to the golgi apparatus. It is found in the trans-Golgi network membrane. It localises to the late endosome membrane. Its subcellular location is the lysosome membrane. The protein resides in the endoplasmic reticulum membrane. The protein localises to the phagosome membrane. It is found in the synapse. It localises to the synaptosome. Involved in the targeting and/or fusion of transport vesicles to their target membrane during transport of proteins from the early endosome to the lysosome. Required for heterotypic fusion of late endosomes with lysosomes and homotypic lysosomal fusion. Required for calcium regulated lysosomal exocytosis. Involved in the export of chylomicrons from the endoplasmic reticulum to the cis Golgi. Required for exocytosis of mediators during eosinophil and neutrophil degranulation, and target cell killing by natural killer cells. Required for focal exocytosis of late endocytic vesicles during phagosome formation. This chain is Vesicle-associated membrane protein 7 (VAMP7), found in Homo sapiens (Human).